Here is a 75-residue protein sequence, read N- to C-terminus: UPF0346 protein LJ_1103 (75 aa).

Belongs to the UPF0346 family.

The chain is UPF0346 protein LJ_1103 from Lactobacillus johnsonii (strain CNCM I-12250 / La1 / NCC 533).